We begin with the raw amino-acid sequence, 322 residues long: UDP-N-acetylenolpyruvoylglucosamine reductase (322 aa).

The FAD-binding PCMH-type domain maps to 36 to 202 (RAGGPAQVLF…TSVLFEGVPG (167 aa)). Residue Arg-182 is part of the active site. Ser-231 functions as the Proton donor in the catalytic mechanism. Glu-301 is a catalytic residue.

Belongs to the MurB family. It depends on FAD as a cofactor.

It localises to the cytoplasm. It carries out the reaction UDP-N-acetyl-alpha-D-muramate + NADP(+) = UDP-N-acetyl-3-O-(1-carboxyvinyl)-alpha-D-glucosamine + NADPH + H(+). It participates in cell wall biogenesis; peptidoglycan biosynthesis. Functionally, cell wall formation. The polypeptide is UDP-N-acetylenolpyruvoylglucosamine reductase (Brucella abortus (strain S19)).